The sequence spans 629 residues: tRNA uridine 5-carboxymethylaminomethyl modification enzyme MnmG (629 aa).

FAD contacts are provided by residues 13–18 (GGGHAG), Val125, and Ser180. NAD(+) is bound at residue 273 to 287 (GPRYCPSIEDKVMRF). FAD is bound at residue Gln370.

It belongs to the MnmG family. Homodimer. Heterotetramer of two MnmE and two MnmG subunits. FAD serves as cofactor.

The protein localises to the cytoplasm. NAD-binding protein involved in the addition of a carboxymethylaminomethyl (cmnm) group at the wobble position (U34) of certain tRNAs, forming tRNA-cmnm(5)s(2)U34. The protein is tRNA uridine 5-carboxymethylaminomethyl modification enzyme MnmG of Pasteurella multocida (strain Pm70).